The sequence spans 194 residues: Large ribosomal subunit protein uL24c (194 aa).

The N-terminal 50 residues, 1–50 (MVAMAMASLQSSMSSLSLSSNSFLGQPLSPITLSPFLQGKPTEKKCLIVM), are a transit peptide targeting the chloroplast.

The protein belongs to the universal ribosomal protein uL24 family. In terms of assembly, part of the 50S ribosomal subunit.

It localises to the plastid. Its subcellular location is the chloroplast. In terms of biological role, one of two assembly initiator proteins, it binds directly to the 5'-end of the 23S rRNA, where it nucleates assembly of the 50S subunit. The chain is Large ribosomal subunit protein uL24c (RPL24) from Pisum sativum (Garden pea).